We begin with the raw amino-acid sequence, 469 residues long: Ribulose bisphosphate carboxylase large chain (469 aa).

Lys-5 is subject to N6,N6,N6-trimethyllysine. The substrate site is built by Asn-114 and Thr-164. Lys-166 (proton acceptor) is an active-site residue. Lys-168 lines the substrate pocket. The Mg(2+) site is built by Lys-192, Asp-194, and Glu-195. Position 192 is an N6-carboxylysine (Lys-192). The Proton acceptor role is filled by His-285. The substrate site is built by Arg-286, His-318, and Ser-370.

The protein belongs to the RuBisCO large chain family. Type I subfamily. Heterohexadecamer of 8 large chains and 8 small chains; disulfide-linked. The disulfide link is formed within the large subunit homodimers. Mg(2+) is required as a cofactor. The disulfide bond which can form in the large chain dimeric partners within the hexadecamer appears to be associated with oxidative stress and protein turnover.

Its subcellular location is the plastid. The protein localises to the chloroplast. It catalyses the reaction 2 (2R)-3-phosphoglycerate + 2 H(+) = D-ribulose 1,5-bisphosphate + CO2 + H2O. The catalysed reaction is D-ribulose 1,5-bisphosphate + O2 = 2-phosphoglycolate + (2R)-3-phosphoglycerate + 2 H(+). Functionally, ruBisCO catalyzes two reactions: the carboxylation of D-ribulose 1,5-bisphosphate, the primary event in carbon dioxide fixation, as well as the oxidative fragmentation of the pentose substrate in the photorespiration process. Both reactions occur simultaneously and in competition at the same active site. The chain is Ribulose bisphosphate carboxylase large chain from Nicandra physalodes (Apple-of-Peru).